The primary structure comprises 450 residues: Glucose-6-phosphate isomerase (450 aa).

The Proton donor role is filled by E290. Residues H311 and K425 contribute to the active site.

It belongs to the GPI family.

It localises to the cytoplasm. It catalyses the reaction alpha-D-glucose 6-phosphate = beta-D-fructose 6-phosphate. The protein operates within carbohydrate biosynthesis; gluconeogenesis. It functions in the pathway carbohydrate degradation; glycolysis; D-glyceraldehyde 3-phosphate and glycerone phosphate from D-glucose: step 2/4. In terms of biological role, catalyzes the reversible isomerization of glucose-6-phosphate to fructose-6-phosphate. The chain is Glucose-6-phosphate isomerase from Listeria monocytogenes serovar 1/2a (strain ATCC BAA-679 / EGD-e).